Here is a 434-residue protein sequence, read N- to C-terminus: dTDP-D-glucose 4,6-dehydratase (434 aa).

Substrate is bound at residue threonine 134. Aspartate 135 acts as the Proton donor in catalysis. Catalysis depends on proton acceptor residues glutamate 136 and tyrosine 169. Residues 286–309 (NNNNNNNNNNNNNNNNNNNNNNNN) show a composition bias toward low complexity. The tract at residues 286–310 (NNNNNNNNNNNNNNNNNNNNNNNND) is disordered.

The protein belongs to the NAD(P)-dependent epimerase/dehydratase family. dTDP-glucose dehydratase subfamily. The cofactor is NAD(+).

The enzyme catalyses dTDP-alpha-D-glucose = dTDP-4-dehydro-6-deoxy-alpha-D-glucose + H2O. This chain is dTDP-D-glucose 4,6-dehydratase (tgds), found in Dictyostelium discoideum (Social amoeba).